The primary structure comprises 427 residues: Serine--tRNA ligase (427 aa).

235–237 provides a ligand contact to L-serine; it reads TSE. 266–268 contributes to the ATP binding site; sequence RSE. Glu-289 contributes to the L-serine binding site. 353 to 356 serves as a coordination point for ATP; that stretch reads EISS. Ser-388 contributes to the L-serine binding site.

This sequence belongs to the class-II aminoacyl-tRNA synthetase family. Type-1 seryl-tRNA synthetase subfamily. In terms of assembly, homodimer. The tRNA molecule binds across the dimer.

It localises to the cytoplasm. The catalysed reaction is tRNA(Ser) + L-serine + ATP = L-seryl-tRNA(Ser) + AMP + diphosphate + H(+). It catalyses the reaction tRNA(Sec) + L-serine + ATP = L-seryl-tRNA(Sec) + AMP + diphosphate + H(+). It functions in the pathway aminoacyl-tRNA biosynthesis; selenocysteinyl-tRNA(Sec) biosynthesis; L-seryl-tRNA(Sec) from L-serine and tRNA(Sec): step 1/1. Its function is as follows. Catalyzes the attachment of serine to tRNA(Ser). Is also able to aminoacylate tRNA(Sec) with serine, to form the misacylated tRNA L-seryl-tRNA(Sec), which will be further converted into selenocysteinyl-tRNA(Sec). The polypeptide is Serine--tRNA ligase (Chromobacterium violaceum (strain ATCC 12472 / DSM 30191 / JCM 1249 / CCUG 213 / NBRC 12614 / NCIMB 9131 / NCTC 9757 / MK)).